Here is a 337-residue protein sequence, read N- to C-terminus: Formamidase (337 aa).

The CN hydrolase domain maps to 14–257 (VVIGLVQLQL…DEIITAEVRP (244 aa)). The Proton acceptor role is filled by Glu60. Residue Lys129 is the Proton donor of the active site. Cys162 serves as the catalytic Nucleophile.

Belongs to the carbon-nitrogen hydrolase superfamily. Aliphatic amidase family.

The enzyme catalyses formamide + H2O = formate + NH4(+). Functionally, is an aliphatic amidase with a restricted substrate specificity, as it only hydrolyzes formamide. The chain is Formamidase from Bradyrhizobium diazoefficiens (strain JCM 10833 / BCRC 13528 / IAM 13628 / NBRC 14792 / USDA 110).